The sequence spans 614 residues: Maltose permease MAL31 (614 aa).

The disordered stretch occupies residues Met-1–Ser-48. The Cytoplasmic portion of the chain corresponds to Met-1–Thr-108. Basic and acidic residues predominate over residues Glu-38–Ser-48. Residues Thr-109–Phe-129 traverse the membrane as a helical segment. At Gln-130–Glu-144 the chain is on the extracellular side. Residues Ile-145–Leu-165 form a helical membrane-spanning segment. At Gln-166–Thr-180 the chain is on the cytoplasmic side. Residues Leu-181 to Leu-201 traverse the membrane as a helical segment. A topological domain (extracellular) is located at residue Gly-202. Residues Met-203 to Val-223 form a helical membrane-spanning segment. At Ser-224–Tyr-236 the chain is on the cytoplasmic side. A helical membrane pass occupies residues Tyr-237–Met-257. Residues Lys-258–Lys-272 are Extracellular-facing. The helical transmembrane segment at Leu-273 to Pro-293 threads the bilayer. Over Glu-294–Arg-364 the chain is Cytoplasmic. Residues Ile-365–Thr-385 traverse the membrane as a helical segment. Topologically, residues Tyr-386 to Ala-398 are extracellular. Residues Phe-399–Ala-419 form a helical membrane-spanning segment. Over Ser-420–Asp-427 the chain is Cytoplasmic. The chain crosses the membrane as a helical span at residues Leu-428 to Cys-448. The Extracellular segment spans residues Ser-449–Ala-460. Residues Leu-461–Val-481 form a helical membrane-spanning segment. Over Ser-482–Thr-493 the chain is Cytoplasmic. Residues Ile-494–Tyr-514 form a helical membrane-spanning segment. Over Gln-515–Lys-526 the chain is Extracellular. A helical transmembrane segment spans residues Ser-527–Pro-547. Topologically, residues Glu-548–Lys-614 are cytoplasmic. The tract at residues Glu-595–Lys-614 is disordered.

This sequence belongs to the major facilitator superfamily. Sugar transporter (TC 2.A.1.1) family.

The protein resides in the membrane. Functionally, high-affinity uptake of maltose and maltotriose. Also transports turanose but not alpha-methylglucoside, melezitose or trehalose. In Saccharomyces cerevisiae (strain ATCC 204508 / S288c) (Baker's yeast), this protein is Maltose permease MAL31 (MAL31).